A 417-amino-acid chain; its full sequence is MLEQMGAAAKAASYKLALLSSREKNRVLEKIADYLEGQSEQILLANEQDLAEARANGLSDAMLDRLALNPARLKSIADDVRQVCNLADPVGQVIDGGLLDSGLRLERRRVPLGVVGVIYEARPNVTVDVASLCLKTGNAAILRGGKETWRTNAATVKVIQQALEECGLPAGAVQAIESPDRALVNEMLRMDKYIDMLIPRGGAGLHKLCREQSTIPVITGGIGVCHIVVDDSAEIEPALKIIVNAKTQRPSTCNTVETLLVHQDIADTFLPALSQQMAESGVTLHADPRALALLQDGPAKVEAVKSEQYDDEYLSLDLNVKVVADLDDAIAHIREHGTQHSDAILTRKLSHGNRFINEVDSSAVYVNASTRFTDGGQFGLGAEVAVSTQKLHARGPMGLEALTTYKWIGYGDDTIRA.

The protein belongs to the gamma-glutamyl phosphate reductase family.

Its subcellular location is the cytoplasm. The enzyme catalyses L-glutamate 5-semialdehyde + phosphate + NADP(+) = L-glutamyl 5-phosphate + NADPH + H(+). The protein operates within amino-acid biosynthesis; L-proline biosynthesis; L-glutamate 5-semialdehyde from L-glutamate: step 2/2. Catalyzes the NADPH-dependent reduction of L-glutamate 5-phosphate into L-glutamate 5-semialdehyde and phosphate. The product spontaneously undergoes cyclization to form 1-pyrroline-5-carboxylate. The chain is Gamma-glutamyl phosphate reductase from Enterobacter sp. (strain 638).